Consider the following 283-residue polypeptide: MTGCVNSISPPPVTLYRHRASPSRSSFSLSGDALHSLYRHRRVSRSPSIIAPKFQIVAAEKSEPLKIMISGAPASGKGTQCELITHKYGLVHISAGDLLRAEIASGSENGRRAKEHMEKGQLVPDEIVVMMVKDRLSQTDSEQKGWLLDGYPRSASQATALKGFGFQPDLFIVLEVPEEILIERVVGRRLDPVTGKIYHLKYSPPETEEIAVRLTQRFDDTEEKAKLRLKTHNQNVSDVLSMYDDITIKIEGNRSKEEVFAQIDSSLSELLQERNTAPSSLLS.

A chloroplast-targeting transit peptide spans methionine 1–alanine 59. Residue alanine 74 to threonine 79 coordinates ATP. Residues serine 94–valine 123 form an NMP region. AMP-binding positions include arginine 100, glutamine 121 to valine 123, glycine 150 to arginine 153, and glutamine 157. The interval glycine 187–aspartate 220 is LID. Arginine 188 serves as a coordination point for ATP. Residues arginine 217 and arginine 228 each coordinate AMP.

Belongs to the adenylate kinase family. Monomer.

It localises to the plastid. The protein localises to the chloroplast stroma. The enzyme catalyses AMP + ATP = 2 ADP. Catalyzes the reversible transfer of the terminal phosphate group between ATP and AMP. Plays an important role in cellular energy homeostasis and in adenine nucleotide metabolism. Plays a major role in the equilibration of adenylates and de novo synthesis of ADP in the plastid stroma. The protein is Adenylate kinase 2, chloroplastic of Arabidopsis thaliana (Mouse-ear cress).